We begin with the raw amino-acid sequence, 121 residues long: Small ribosomal subunit protein bS16 (121 aa).

A disordered region spans residues Gly-88 to Ser-121. The segment covering Ala-90 to Lys-111 has biased composition (basic and acidic residues). Residues Thr-112–Ser-121 are compositionally biased toward polar residues.

This sequence belongs to the bacterial ribosomal protein bS16 family.

This Prochlorococcus marinus (strain MIT 9215) protein is Small ribosomal subunit protein bS16.